The sequence spans 160 residues: 2-C-methyl-D-erythritol 2,4-cyclodiphosphate synthase (160 aa).

A divalent metal cation-binding residues include Asp12 and His14. 4-CDP-2-C-methyl-D-erythritol 2-phosphate-binding positions include 12–14 (DVH) and 38–39 (HS). His46 is a binding site for a divalent metal cation. Residues 60 to 62 (DIG), 65 to 69 (FPDTD), 136 to 139 (TTTE), Phe143, and Arg146 contribute to the 4-CDP-2-C-methyl-D-erythritol 2-phosphate site.

The protein belongs to the IspF family. Homotrimer. A divalent metal cation is required as a cofactor.

It catalyses the reaction 4-CDP-2-C-methyl-D-erythritol 2-phosphate = 2-C-methyl-D-erythritol 2,4-cyclic diphosphate + CMP. Its pathway is isoprenoid biosynthesis; isopentenyl diphosphate biosynthesis via DXP pathway; isopentenyl diphosphate from 1-deoxy-D-xylulose 5-phosphate: step 4/6. In terms of biological role, involved in the biosynthesis of isopentenyl diphosphate (IPP) and dimethylallyl diphosphate (DMAPP), two major building blocks of isoprenoid compounds. Catalyzes the conversion of 4-diphosphocytidyl-2-C-methyl-D-erythritol 2-phosphate (CDP-ME2P) to 2-C-methyl-D-erythritol 2,4-cyclodiphosphate (ME-CPP) with a corresponding release of cytidine 5-monophosphate (CMP). This is 2-C-methyl-D-erythritol 2,4-cyclodiphosphate synthase from Acinetobacter baumannii (strain AB307-0294).